The following is a 297-amino-acid chain: Inosose dehydratase (297 aa).

The protein belongs to the IolE/MocC family. Glutathione is required as a cofactor. Co(2+) serves as cofactor. It depends on Mn(2+) as a cofactor.

The enzyme catalyses scyllo-inosose = 3D-3,5/4-trihydroxycyclohexane-1,2-dione + H2O. It participates in polyol metabolism; myo-inositol degradation into acetyl-CoA; acetyl-CoA from myo-inositol: step 2/7. In terms of biological role, catalyzes the dehydration of inosose (2-keto-myo-inositol, 2KMI or 2,4,6/3,5-pentahydroxycyclohexanone) to 3D-(3,5/4)-trihydroxycyclohexane-1,2-dione (D-2,3-diketo-4-deoxy-epi-inositol). The sequence is that of Inosose dehydratase from Clostridium perfringens (strain ATCC 13124 / DSM 756 / JCM 1290 / NCIMB 6125 / NCTC 8237 / Type A).